Reading from the N-terminus, the 1009-residue chain is Probable beta-galactosidase B (1009 aa).

The N-terminal stretch at 1–21 (MAQLFTKIIVYFLLFASPLLA) is a signal peptide. A glycan (N-linked (GlcNAc...) asparagine) is linked at asparagine 28. Tyrosine 85 contacts substrate. Asparagine 95 carries an N-linked (GlcNAc...) asparagine glycan. Residues asparagine 130, alanine 131, glutamate 132, and asparagine 190 each coordinate substrate. Residue glutamate 191 is the Proton donor of the active site. Asparagine 247 is a glycosylation site (N-linked (GlcNAc...) asparagine). Tyrosine 260 contacts substrate. Cysteine 266 and cysteine 319 are disulfide-bonded. Catalysis depends on glutamate 303, which acts as the Nucleophile. Tyrosine 368 contacts substrate. 10 N-linked (GlcNAc...) asparagine glycosylation sites follow: asparagine 375, asparagine 406, asparagine 427, asparagine 451, asparagine 682, asparagine 740, asparagine 771, asparagine 784, asparagine 826, and asparagine 883.

The protein belongs to the glycosyl hydrolase 35 family.

The protein localises to the secreted. The catalysed reaction is Hydrolysis of terminal non-reducing beta-D-galactose residues in beta-D-galactosides.. Its function is as follows. Cleaves beta-linked terminal galactosyl residues from gangliosides, glycoproteins, and glycosaminoglycans. The polypeptide is Probable beta-galactosidase B (lacB) (Talaromyces marneffei (strain ATCC 18224 / CBS 334.59 / QM 7333) (Penicillium marneffei)).